A 235-amino-acid polypeptide reads, in one-letter code: Flavonoid 3',5'-methyltransferase (235 aa).

S-adenosyl-L-methionine contacts are provided by residues Val51, Glu73, 75-76, Ser81, Asp99, and Ala128; that span reads GV. Asp151 serves as a coordination point for a divalent metal cation. Asp153 lines the S-adenosyl-L-methionine pocket. A divalent metal cation is bound by residues Asp177 and Asn178.

It belongs to the class I-like SAM-binding methyltransferase superfamily. Cation-dependent O-methyltransferase family. CCoAMT subfamily. Requires a divalent metal cation as cofactor.

The protein resides in the cytoplasm. It catalyses the reaction S-adenosyl-L-methionine + a 3'-hydroxyflavonoid = S-adenosyl-L-homocysteine + a 3'-methoxyflavonoid.. The catalysed reaction is S-adenosyl-L-methionine + a 5'-hydroxy-3'-methoxyflavonoid = S-adenosyl-L-homocysteine + a 3',5'-dimethoxyflavonoid.. The protein operates within pigment biosynthesis; anthocyanin biosynthesis. Mediates O-methylation of anthocyanins. Anthocyanins are major pigments in grapes: at ripening initiation in red grapevine berries, the exocarp turns color from green to red and then to purple due to the accumulation and extent of methylation of anthocyanins. Catalyzes both 3' and 5' O-methylation of anthocyanins, with a preference for glycosylated substrates. Active on both anthocyanins and flavonols in vitro. Most active with delphinidin 3-glucoside but also acts on cyanidin 3-glucoside, cyanidin, myricetin, quercetin and quercetin 3-glucoside. Not able to methylate flavan type skeletons with chiral centers, such as catechins or dihydroquercetin. This chain is Flavonoid 3',5'-methyltransferase (FAOMT), found in Vitis vinifera (Grape).